The primary structure comprises 448 residues: Late embryogenesis abundant protein ECP63 (448 aa).

2 stretches are compositionally biased toward basic and acidic residues: residues 282 to 326 and 334 to 354; these read TEEA…EEAG and QKTR…KDSA. Disordered stretches follow at residues 282 to 360 and 411 to 448; these read TEEA…RGNE and SKPG…KGKL. Residues 297–331 are a coiled coil; it reads KENMEKAGEVTRQKMEEMRLEGKELKEEAGAKAQE. A compositionally biased stretch (polar residues) spans 420 to 432; it reads LKASDQMTGQTFN. A compositionally biased stretch (basic and acidic residues) spans 435–448; it reads GRMDDDARKDKGKL.

It belongs to the LEA type 4 family. As to expression, expressed in mature seeds.

May be involved in the BHLH109-mediated regulation of somatic embryogenesis. This is Late embryogenesis abundant protein ECP63 from Arabidopsis thaliana (Mouse-ear cress).